Here is a 321-residue protein sequence, read N- to C-terminus: MKFVATLIACGLSGLALAAPTATVNSLGKRAADDAAFGYASLNGGTTGGAGGTTTTVSSYAAFTAAVSSDAKKVVYVSGPIKQSAKQVKVGSNTSIIGKDSTAVLEGFGLLVKEKSNVIIRNLGVKKVLAENGDAIGIQYSNNVWVDHVDVSSDRDHDKDYYDGLIDVTHAADYVTISNSYIHDHWKASLVGHSDNNGDEDKGHLRVTYANNYWSNINSRAPSLRFGTGHIYNSYFENVSDGINTRDGAQVLVESNQFVGSSKALYSTDDGYAVERDNDFGGAKNTALQGTLTTVPYSYSLLGSSKVKSAVVGVAGQTLKF.

The first 18 residues, 1 to 18 (MKFVATLIACGLSGLALA), serve as a signal peptide directing secretion. A glycan (N-linked (GlcNAc...) asparagine) is linked at N93. The Ca(2+) site is built by D134, D163, and D167. R220 is a catalytic residue. Residue N238 is glycosylated (N-linked (GlcNAc...) asparagine).

Belongs to the polysaccharide lyase 1 family. It depends on Ca(2+) as a cofactor.

It is found in the secreted. It catalyses the reaction Eliminative cleavage of (1-&gt;4)-alpha-D-galacturonan to give oligosaccharides with 4-deoxy-alpha-D-galact-4-enuronosyl groups at their non-reducing ends.. In terms of biological role, pectinolytic enzyme consist of four classes of enzymes: pectin lyase, polygalacturonase, pectin methylesterase and rhamnogalacturonase. Among pectinolytic enzymes, pectin lyase is the most important in depolymerization of pectin, since it cleaves internal glycosidic bonds of highly methylated pectins. Favors pectate, the anion, over pectin, the methyl ester. The protein is Probable pectate lyase A (plyA) of Aspergillus fumigatus (strain ATCC MYA-4609 / CBS 101355 / FGSC A1100 / Af293) (Neosartorya fumigata).